Consider the following 375-residue polypeptide: Succinyl-diaminopimelate desuccinylase (375 aa).

His66 contacts Zn(2+). Residue Asp68 is part of the active site. Residue Asp99 coordinates Zn(2+). The active-site Proton acceptor is Glu133. Glu134, Glu162, and His348 together coordinate Zn(2+).

This sequence belongs to the peptidase M20A family. DapE subfamily. As to quaternary structure, homodimer. The cofactor is Zn(2+). Co(2+) is required as a cofactor.

It carries out the reaction N-succinyl-(2S,6S)-2,6-diaminopimelate + H2O = (2S,6S)-2,6-diaminopimelate + succinate. It functions in the pathway amino-acid biosynthesis; L-lysine biosynthesis via DAP pathway; LL-2,6-diaminopimelate from (S)-tetrahydrodipicolinate (succinylase route): step 3/3. Catalyzes the hydrolysis of N-succinyl-L,L-diaminopimelic acid (SDAP), forming succinate and LL-2,6-diaminopimelate (DAP), an intermediate involved in the bacterial biosynthesis of lysine and meso-diaminopimelic acid, an essential component of bacterial cell walls. This Serratia proteamaculans (strain 568) protein is Succinyl-diaminopimelate desuccinylase.